The chain runs to 352 residues: D-alanine--D-alanine ligase A (352 aa).

An ATP-grasp domain is found at 138 to 341 (KRMVQSAGLV…PPKLVGALVE (204 aa)). 165–220 (ECLGSSTLFVKPATSGSSIGVSRVSNALEYAAAFAIAAREDTKVLVEAAVCGREIE) is an ATP binding site. The Mg(2+) site is built by Asp295, Glu308, and Asn310.

This sequence belongs to the D-alanine--D-alanine ligase family. The cofactor is Mg(2+). Mn(2+) is required as a cofactor.

The protein localises to the cytoplasm. It catalyses the reaction 2 D-alanine + ATP = D-alanyl-D-alanine + ADP + phosphate + H(+). Its pathway is cell wall biogenesis; peptidoglycan biosynthesis. Functionally, cell wall formation. This chain is D-alanine--D-alanine ligase A, found in Pseudomonas putida (strain ATCC 47054 / DSM 6125 / CFBP 8728 / NCIMB 11950 / KT2440).